The primary structure comprises 154 residues: 6,7-dimethyl-8-ribityllumazine synthase (154 aa).

5-amino-6-(D-ribitylamino)uracil-binding positions include Phe22, 56-58 (AFE), and 80-82 (TVI). 85 to 86 (AT) is a (2S)-2-hydroxy-3-oxobutyl phosphate binding site. Residue His88 is the Proton donor of the active site. Residue Phe113 coordinates 5-amino-6-(D-ribitylamino)uracil. Residue Arg127 coordinates (2S)-2-hydroxy-3-oxobutyl phosphate.

The protein belongs to the DMRL synthase family. As to quaternary structure, forms an icosahedral capsid composed of 60 subunits, arranged as a dodecamer of pentamers.

It carries out the reaction (2S)-2-hydroxy-3-oxobutyl phosphate + 5-amino-6-(D-ribitylamino)uracil = 6,7-dimethyl-8-(1-D-ribityl)lumazine + phosphate + 2 H2O + H(+). It functions in the pathway cofactor biosynthesis; riboflavin biosynthesis; riboflavin from 2-hydroxy-3-oxobutyl phosphate and 5-amino-6-(D-ribitylamino)uracil: step 1/2. In terms of biological role, catalyzes the formation of 6,7-dimethyl-8-ribityllumazine by condensation of 5-amino-6-(D-ribitylamino)uracil with 3,4-dihydroxy-2-butanone 4-phosphate. This is the penultimate step in the biosynthesis of riboflavin. The chain is 6,7-dimethyl-8-ribityllumazine synthase from Bacillus licheniformis (strain ATCC 14580 / DSM 13 / JCM 2505 / CCUG 7422 / NBRC 12200 / NCIMB 9375 / NCTC 10341 / NRRL NRS-1264 / Gibson 46).